The sequence spans 174 residues: NADH-ubiquinone oxidoreductase chain 6 (174 aa).

Helical transmembrane passes span serine 25–valine 45, phenylalanine 48–tyrosine 68, phenylalanine 82–leucine 102, and leucine 143–threonine 163.

The protein belongs to the complex I subunit 6 family.

It localises to the mitochondrion membrane. It catalyses the reaction a ubiquinone + NADH + 5 H(+)(in) = a ubiquinol + NAD(+) + 4 H(+)(out). Core subunit of the mitochondrial membrane respiratory chain NADH dehydrogenase (Complex I) that is believed to belong to the minimal assembly required for catalysis. Complex I functions in the transfer of electrons from NADH to the respiratory chain. The immediate electron acceptor for the enzyme is believed to be ubiquinone. In Anopheles gambiae (African malaria mosquito), this protein is NADH-ubiquinone oxidoreductase chain 6 (mt:ND6).